The chain runs to 200 residues: Ribonuclease HII (200 aa).

The RNase H type-2 domain occupies Q11–G200. A divalent metal cation is bound by residues D17, E18, and D109.

The protein belongs to the RNase HII family. Requires Mn(2+) as cofactor. The cofactor is Mg(2+).

The protein localises to the cytoplasm. The enzyme catalyses Endonucleolytic cleavage to 5'-phosphomonoester.. Functionally, endonuclease that specifically degrades the RNA of RNA-DNA hybrids. The sequence is that of Ribonuclease HII from Hamiltonella defensa subsp. Acyrthosiphon pisum (strain 5AT).